A 725-amino-acid chain; its full sequence is D-(-)-3-hydroxybutyrate oligomer hydrolase (725 aa).

Residues 1-22 form the signal peptide; the sequence is MNTTRDANRLRQRASLSGLALA. The active-site Charge relay system is Ser-322.

Belongs to the D-(-)-3-hydroxybutyrate oligomer hydrolase family.

It localises to the secreted. The enzyme catalyses (3R)-hydroxybutanoate dimer + H2O = 2 (R)-3-hydroxybutanoate + H(+). Its pathway is lipid metabolism; butanoate metabolism. Its function is as follows. Participates in the degradation of poly-3-hydroxybutyrate (PHB). It works downstream of poly(3-hydroxybutyrate) depolymerase, hydrolyzing D(-)-3-hydroxybutyrate oligomers of various length (3HB-oligomers) into 3HB-monomers. This is D-(-)-3-hydroxybutyrate oligomer hydrolase from Ralstonia nicotianae (strain ATCC BAA-1114 / GMI1000) (Ralstonia solanacearum).